A 426-amino-acid chain; its full sequence is Serine--tRNA ligase (426 aa).

231–233 (TSE) contributes to the L-serine binding site. An ATP-binding site is contributed by 262-264 (RSE). An L-serine-binding site is contributed by Glu285. ATP is bound at residue 349 to 352 (EISS). Ser385 lines the L-serine pocket.

This sequence belongs to the class-II aminoacyl-tRNA synthetase family. Type-1 seryl-tRNA synthetase subfamily. Homodimer. The tRNA molecule binds across the dimer.

The protein resides in the cytoplasm. It catalyses the reaction tRNA(Ser) + L-serine + ATP = L-seryl-tRNA(Ser) + AMP + diphosphate + H(+). It carries out the reaction tRNA(Sec) + L-serine + ATP = L-seryl-tRNA(Sec) + AMP + diphosphate + H(+). It functions in the pathway aminoacyl-tRNA biosynthesis; selenocysteinyl-tRNA(Sec) biosynthesis; L-seryl-tRNA(Sec) from L-serine and tRNA(Sec): step 1/1. Functionally, catalyzes the attachment of serine to tRNA(Ser). Is also able to aminoacylate tRNA(Sec) with serine, to form the misacylated tRNA L-seryl-tRNA(Sec), which will be further converted into selenocysteinyl-tRNA(Sec). This is Serine--tRNA ligase from Legionella pneumophila (strain Corby).